The sequence spans 1264 residues: Protein fantom (1264 aa).

4 coiled-coil regions span residues 64–143, 196–268, 299–454, and 488–555; these read LKQH…LQVQ, YSNS…NVET, LRIS…ESDI, and NKDL…VHLL. C2 domains lie at 577–714 and 773–897; these read KQYK…FCTT and AATT…SGIF. Disordered stretches follow at residues 979-1018 and 1047-1093; these read DTIS…YPSK and QLAS…NTKQ. Residues 1056 to 1080 are compositionally biased toward acidic residues; it reads SEDETEITEELEPEDEDRSASDSDD.

It belongs to the RPGRIP1 family. Interacts with NPHP4 and NPHP1; NPHP1, NPHP4 and RPGRIP1L are proposed to form a functional NPHP1-4-8 module localized to cell-cell contacts and the ciliary transition zone; NPHP4 mediates the interaction between NPHP1 and RPGRIP1L. Interacts with IQCB1; the interaction likely requires additional interactors. Interacts with TBXA2R (via C-terminus), RPGR, NEK4. Interacts with NPHP4, INVS and DVL2; proposed to form a complex involved in DVL2 stabilization. Interacts with PSMD2. As to expression, ubiquitously expressed. Not found in heart and skin.

It is found in the cytoplasm. The protein resides in the cytoskeleton. Its subcellular location is the cilium basal body. It localises to the cilium axoneme. The protein localises to the microtubule organizing center. It is found in the centrosome. The protein resides in the cell junction. Its subcellular location is the tight junction. Functionally, negatively regulates signaling through the G-protein coupled thromboxane A2 receptor (TBXA2R). May be involved in mechanisms like programmed cell death, craniofacial development, patterning of the limbs, and formation of the left-right axis. Involved in the organization of apical junctions; the function is proposed to implicate a NPHP1-4-8 module. Does not seem to be strictly required for ciliogenesis. Involved in establishment of planar cell polarity such as in cochlear sensory epithelium and is proposed to implicate stabilization of disheveled proteins. Involved in regulation of proteasomal activity at the primary cilium probably implicating association with PSDM2. The polypeptide is Protein fantom (Rpgrip1l) (Mus musculus (Mouse)).